The following is a 252-amino-acid chain: 2-succinyl-6-hydroxy-2,4-cyclohexadiene-1-carboxylate synthase (252 aa).

This sequence belongs to the AB hydrolase superfamily. MenH family. As to quaternary structure, monomer.

It catalyses the reaction 5-enolpyruvoyl-6-hydroxy-2-succinyl-cyclohex-3-ene-1-carboxylate = (1R,6R)-6-hydroxy-2-succinyl-cyclohexa-2,4-diene-1-carboxylate + pyruvate. It participates in quinol/quinone metabolism; 1,4-dihydroxy-2-naphthoate biosynthesis; 1,4-dihydroxy-2-naphthoate from chorismate: step 3/7. It functions in the pathway quinol/quinone metabolism; menaquinone biosynthesis. Its function is as follows. Catalyzes a proton abstraction reaction that results in 2,5-elimination of pyruvate from 2-succinyl-5-enolpyruvyl-6-hydroxy-3-cyclohexene-1-carboxylate (SEPHCHC) and the formation of 2-succinyl-6-hydroxy-2,4-cyclohexadiene-1-carboxylate (SHCHC). The polypeptide is 2-succinyl-6-hydroxy-2,4-cyclohexadiene-1-carboxylate synthase (Citrobacter koseri (strain ATCC BAA-895 / CDC 4225-83 / SGSC4696)).